The chain runs to 358 residues: Peptide chain release factor 1 (358 aa).

Residue glutamine 237 is modified to N5-methylglutamine.

The protein belongs to the prokaryotic/mitochondrial release factor family. Post-translationally, methylated by PrmC. Methylation increases the termination efficiency of RF1.

It is found in the cytoplasm. Functionally, peptide chain release factor 1 directs the termination of translation in response to the peptide chain termination codons UAG and UAA. The chain is Peptide chain release factor 1 from Streptomyces griseus subsp. griseus (strain JCM 4626 / CBS 651.72 / NBRC 13350 / KCC S-0626 / ISP 5235).